A 164-amino-acid chain; its full sequence is Ribosome maturation factor RimM (164 aa).

The region spanning 90-161 (KGSYFIADLI…TVTIKPLEIW (72 aa)) is the PRC barrel domain.

The protein belongs to the RimM family. As to quaternary structure, binds ribosomal protein uS19.

It is found in the cytoplasm. An accessory protein needed during the final step in the assembly of 30S ribosomal subunit, possibly for assembly of the head region. Essential for efficient processing of 16S rRNA. May be needed both before and after RbfA during the maturation of 16S rRNA. It has affinity for free ribosomal 30S subunits but not for 70S ribosomes. The chain is Ribosome maturation factor RimM from Clostridium botulinum (strain ATCC 19397 / Type A).